A 286-amino-acid chain; its full sequence is Tungstate-binding protein TupA (286 aa).

Positions 1–20 are cleaved as a signal peptide; the sequence is MKRLLSIITAVMMLALALTG. Residue Cys21 is the site of N-palmitoyl cysteine attachment. Cys21 is lipidated: S-diacylglycerol cysteine.

In terms of assembly, monomer. The complex is composed of two ATP-binding proteins (TupC), two transmembrane proteins (TupB) and a solute-binding protein (TupA).

It localises to the cell membrane. Functionally, part of an ABC transporter complex involved in tungstate uptake. Specifically binds tungstate. The polypeptide is Tungstate-binding protein TupA (Peptoclostridium acidaminophilum (Eubacterium acidaminophilum)).